The chain runs to 464 residues: Arginine biosynthesis bifunctional protein ArgJ, mitochondrial (464 aa).

Substrate is bound by residues Thr-191, Lys-220, Thr-231, Glu-318, Asn-459, and Thr-464. Catalysis depends on Thr-231, which acts as the Nucleophile.

This sequence belongs to the ArgJ family. As to quaternary structure, heterodimer of an alpha and a beta chain. In terms of processing, the alpha and beta chains are autoproteolytically processed from a single precursor protein within the mitochondrion.

Its subcellular location is the mitochondrion matrix. The enzyme catalyses N(2)-acetyl-L-ornithine + L-glutamate = N-acetyl-L-glutamate + L-ornithine. The catalysed reaction is L-glutamate + acetyl-CoA = N-acetyl-L-glutamate + CoA + H(+). It functions in the pathway amino-acid biosynthesis; L-arginine biosynthesis; L-ornithine and N-acetyl-L-glutamate from L-glutamate and N(2)-acetyl-L-ornithine (cyclic): step 1/1. It participates in amino-acid biosynthesis; L-arginine biosynthesis; N(2)-acetyl-L-ornithine from L-glutamate: step 1/4. In terms of biological role, catalyzes two activities which are involved in the cyclic version of arginine biosynthesis: the synthesis of acetylglutamate from glutamate and acetyl-CoA, and of ornithine by transacetylation between acetylornithine and glutamate. This chain is Arginine biosynthesis bifunctional protein ArgJ, mitochondrial, found in Pyricularia oryzae (strain 70-15 / ATCC MYA-4617 / FGSC 8958) (Rice blast fungus).